A 227-amino-acid chain; its full sequence is Lipoprotein-releasing system ATP-binding protein LolD (227 aa).

The 221-residue stretch at 7 to 227 folds into the ABC transporter domain; the sequence is LKLTGVERHY…TISDGKVVEF (221 aa). 43–50 contacts ATP; it reads APSGTGKS.

This sequence belongs to the ABC transporter superfamily. Lipoprotein translocase (TC 3.A.1.125) family. As to quaternary structure, the complex is composed of two ATP-binding proteins (LolD) and two transmembrane proteins (LolC and LolE).

It is found in the cell inner membrane. Functionally, part of the ABC transporter complex LolCDE involved in the translocation of mature outer membrane-directed lipoproteins, from the inner membrane to the periplasmic chaperone, LolA. Responsible for the formation of the LolA-lipoprotein complex in an ATP-dependent manner. This Rhizobium etli (strain ATCC 51251 / DSM 11541 / JCM 21823 / NBRC 15573 / CFN 42) protein is Lipoprotein-releasing system ATP-binding protein LolD.